Consider the following 401-residue polypeptide: MLFLKAVIAILSVLPAADAAAILNFENKQGIIPDSYIVVLKNDISSDDFKSHVAWATGVHNANVAKRDVPLAGMQRTFEMDIFKGYSGAFDRATLDDLLKNEQVDYIEPDRMASAQGWTTQGNAPSWGLGRISHQQRGNTDYVFDSTAGRGITIYGVDSGIDILHAEFGGRATWGANFFNNINTDEFGHGTHTAATFGGTNYGVAKNVNIVAVKVLGDQGQGPWSSIIDGLQWAVNDAREKGILGKAIINFSVGGPSSRAADNALTAAHNAGVFVSAAAGNDGADALNYTPGTARSICVIGNINENDYRFTGNGASNWGTRIDLWAPGTDILSALPQGRYGPMTGTSMAAPHVAGSVAILMASGGVSTAEACGVLKDMSTPSVIEPGQGSTNRLLYNGSGQ.

Residues M1–A19 form the signal peptide. Positions A20–Q116 are excised as a propeptide. Positions S35–M112 constitute an Inhibitor I9 domain. The Peptidase S8 domain occupies S126–Q401. Active-site charge relay system residues include D158 and H189. A glycan (N-linked (GlcNAc...) asparagine) is linked at N250. S347 acts as the Charge relay system in catalysis. N397 carries an N-linked (GlcNAc...) asparagine glycan.

The protein belongs to the peptidase S8 family.

It is found in the secreted. Its function is as follows. Secreted subtilisin-like serine protease with keratinolytic activity that contributes to pathogenicity. The sequence is that of Subtilisin-like protease 10 (SUB10) from Arthroderma otae (strain ATCC MYA-4605 / CBS 113480) (Microsporum canis).